The following is a 227-amino-acid chain: Claudin-15 (227 aa).

A topological domain (cytoplasmic) is located at residue Met1. The chain crosses the membrane as a helical span at residues Ser2–Leu24. Over Ser25–Tyr74 the chain is Extracellular. Cysteines 52 and 62 form a disulfide. The helical transmembrane segment at Val75 to Gly99 threads the bilayer. The Cytoplasmic segment spans residues Leu100 to Lys115. Position 111 is a phosphoserine (Ser111). The helical transmembrane segment at Leu116–Val140 threads the bilayer. Over Asn141–Gly159 the chain is Extracellular. Residues Phe146–Phe147 are important for the formation of tight-junction strand-like structures. A helical membrane pass occupies residues Pro160 to Thr182. At Cys183 to Val227 the chain is on the cytoplasmic side. Phosphoserine is present on residues Ser211, Ser214, and Ser217.

Belongs to the claudin family. As to quaternary structure, can form homo- and heteropolymeric tight junction strands. Post-translationally, palmitoylated when heterogeneously expressed in S.frugiperda cells. In terms of tissue distribution, detected in duodenum, jejunum and ileum. Detected on intestinal villi and crypts (at protein level). Ubiquitous. Detected in small and large intestine, colon, jejunum, heart, kidney and lung.

The protein resides in the cell junction. It localises to the tight junction. Its subcellular location is the cell membrane. The catalysed reaction is Na(+)(in) = Na(+)(out). It catalyses the reaction K(+)(in) = K(+)(out). It carries out the reaction Cs(+)(in) = Cs(+)(out). The enzyme catalyses Rb(+)(in) = Rb(+)(out). The catalysed reaction is Li(+)(in) = Li(+)(out). It catalyses the reaction NH4(+)(in) = NH4(+)(out). It carries out the reaction methylamine(out) = methylamine(in). The enzyme catalyses H2O(in) = H2O(out). Forms paracellular channels: polymerizes in tight junction strands with cation- and water-selective channels through the strands, conveying epithelial permeability in a process known as paracellular tight junction permeability. In intestinal epithelium, allows for sodium and water fluxes from the peritoneal side to the lumen of the intestine to regulate nutrient absorption and intestinal morphogenesis. This Mus musculus (Mouse) protein is Claudin-15.